A 619-amino-acid chain; its full sequence is TOX high mobility group box family member 4 (619 aa).

Disordered stretches follow at residues 155-227 (LSLG…QKPV), 304-335 (ELDPVPQSQTPSPPPVTTADPASPAPASTESP), and 436-458 (LPPPRLQPPPLQQMPQPPTQQQV). Residue T176 is modified to Phosphothreonine. 2 positions are modified to phosphoserine: S178 and S182. Over residues 183–193 (LHEDGVDDFRR) the composition is skewed to basic and acidic residues. The span at 208–218 (KQKAPKKRKKK) shows a compositional bias: basic residues. The short motif at 213–218 (KKRKKK) is the Nuclear localization signal element. The segment at residues 223–291 (PQKPVSAYAL…EYLKALAAYK (69 aa)) is a DNA-binding region (HMG box). T313 carries the post-translational modification Phosphothreonine. S315 bears the Phosphoserine mark. The span at 320–335 (TTADPASPAPASTESP) shows a compositional bias: low complexity. A compositionally biased stretch (pro residues) spans 436–453 (LPPPRLQPPPLQQMPQPP). Asymmetric dimethylarginine is present on R479. Residues S531, S548, S550, S558, S560, and S565 each carry the phosphoserine modification.

In terms of assembly, component of the PNUTS-PP1 phosphatase complex, composed of PPP1R10/PNUTS, TOX4, WDR82 and PPP1CA or PPP1CB or PPP1CC. Interacts with PPP1R10/PNUTS. Interacts with FOXO1 and CREB1 (increased by cAMP); FOXO1 and CREB1 are required for full induction of TOX4-dependent activity and the interactions are inhibited by insulin.

The protein localises to the nucleus. It is found in the chromosome. In liver, recruited to target gene promoters following treatment with dexamethasone and cAMP. Binding is decreased in presence of insulin. Functionally, transcription factor that modulates cell fate reprogramming from the somatic state to the pluripotent and neuronal fate. In liver, controls the expression of hormone-regulated gluconeogenic genes such as G6PC1 and PCK1. This regulation is independent of the insulin receptor activation. Also acts as a regulatory component of protein phosphatase 1 (PP1) complexes. Component of the PNUTS-PP1 protein phosphatase complex, a PP1 complex that regulates RNA polymerase II transcription pause-release. PNUTS-PP1 also plays a role in the control of chromatin structure and cell cycle progression during the transition from mitosis into interphase. The sequence is that of TOX high mobility group box family member 4 (Tox4) from Rattus norvegicus (Rat).